The chain runs to 222 residues: GTP-binding nuclear protein Ran-4 (222 aa).

Residues 10 to 174 form the Small GTPase Ran-type domain; sequence DLPTFKLLIV…LYLARRIAGD (165 aa). GTP is bound at residue 21 to 28; it reads DGGTGKTT. Residues 40–48 are switch-I; it reads HNTEPTLGV. GTP contacts are provided by residues Gly-71, 125-128, and 153-155; these read NKVD and SAK. Positions 71–87 are switch-II; that stretch reads GQEKYSGLKDAYYIHGQ.

This sequence belongs to the small GTPase superfamily. Ran family. Found in a nuclear export complex with RanGTP, exportin and pre-miRNA.

Its subcellular location is the nucleus. In terms of biological role, GTP-binding protein involved in nucleocytoplasmic transport. Required for the import of protein into the nucleus and also for RNA export. Involved in chromatin condensation and control of cell cycle. This chain is GTP-binding nuclear protein Ran-4 (RAN4), found in Arabidopsis thaliana (Mouse-ear cress).